The primary structure comprises 681 residues: Methionine--tRNA ligase (681 aa).

The 'HIGH' region motif lies at Pro15–His25. Residues Cys146, Cys149, Cys159, and Cys162 each coordinate Zn(2+). The 'KMSKS' region motif lies at Lys332–Ser336. Lys335 contacts ATP. The disordered stretch occupies residues Asp547–Glu569. A compositionally biased stretch (basic and acidic residues) spans Asp555–Glu569. The region spanning Asp580–Lys681 is the tRNA-binding domain.

The protein belongs to the class-I aminoacyl-tRNA synthetase family. MetG type 1 subfamily. Homodimer. Zn(2+) serves as cofactor.

It is found in the cytoplasm. It carries out the reaction tRNA(Met) + L-methionine + ATP = L-methionyl-tRNA(Met) + AMP + diphosphate. Its function is as follows. Is required not only for elongation of protein synthesis but also for the initiation of all mRNA translation through initiator tRNA(fMet) aminoacylation. The protein is Methionine--tRNA ligase of Hahella chejuensis (strain KCTC 2396).